A 104-amino-acid polypeptide reads, in one-letter code: Large ribosomal subunit protein uL24 (104 aa).

The interval arginine 82–isoleucine 104 is disordered. Residues lysine 93–isoleucine 104 show a composition bias toward basic residues.

The protein belongs to the universal ribosomal protein uL24 family. As to quaternary structure, part of the 50S ribosomal subunit.

One of two assembly initiator proteins, it binds directly to the 5'-end of the 23S rRNA, where it nucleates assembly of the 50S subunit. Its function is as follows. One of the proteins that surrounds the polypeptide exit tunnel on the outside of the subunit. The sequence is that of Large ribosomal subunit protein uL24 from Corynebacterium glutamicum (strain R).